The sequence spans 468 residues: ATP synthase subunit beta (468 aa).

155–162 (GGAGVGKT) serves as a coordination point for ATP.

Belongs to the ATPase alpha/beta chains family. In terms of assembly, F-type ATPases have 2 components, CF(1) - the catalytic core - and CF(0) - the membrane proton channel. CF(1) has five subunits: alpha(3), beta(3), gamma(1), delta(1), epsilon(1). CF(0) has three main subunits: a(1), b(2) and c(9-12). The alpha and beta chains form an alternating ring which encloses part of the gamma chain. CF(1) is attached to CF(0) by a central stalk formed by the gamma and epsilon chains, while a peripheral stalk is formed by the delta and b chains.

It is found in the cell membrane. It carries out the reaction ATP + H2O + 4 H(+)(in) = ADP + phosphate + 5 H(+)(out). Its function is as follows. Produces ATP from ADP in the presence of a proton gradient across the membrane. The catalytic sites are hosted primarily by the beta subunits. The sequence is that of ATP synthase subunit beta from Streptococcus pneumoniae (strain CGSP14).